Here is a 475-residue protein sequence, read N- to C-terminus: Probable proline--tRNA ligase, mitochondrial (475 aa).

Residues 1 to 29 (MEGLLTRCRTLSALATCSLRHSRCIVRKC) constitute a mitochondrion transit peptide.

This sequence belongs to the class-II aminoacyl-tRNA synthetase family.

The protein localises to the mitochondrion matrix. It carries out the reaction tRNA(Pro) + L-proline + ATP = L-prolyl-tRNA(Pro) + AMP + diphosphate. Mitochondrial aminoacyl-tRNA synthetase that catalyzes the specific attachment of the proline amino acid (aa) to the homologous transfer RNA (tRNA), further participating in protein synthesis. The reaction occurs in a two steps: proline is first activated by ATP to form Pro-AMP and then transferred to the acceptor end of tRNA(Pro). The sequence is that of Probable proline--tRNA ligase, mitochondrial (Pars2) from Rattus norvegicus (Rat).